We begin with the raw amino-acid sequence, 180 residues long: Ribulose bisphosphate carboxylase small subunit, chloroplastic 2 (180 aa).

The N-terminal 54 residues, 1-54 (MASMMSNAAVVGRTTPAQASMVAPFTGLKSVSAFPVTKKSNDITSIASNGGRVQ), are a transit peptide targeting the chloroplast.

Belongs to the RuBisCO small chain family. Heterohexadecamer of 8 large and 8 small subunits.

The protein localises to the plastid. It localises to the chloroplast. In terms of biological role, ruBisCO catalyzes two reactions: the carboxylation of D-ribulose 1,5-bisphosphate, the primary event in carbon dioxide fixation, as well as the oxidative fragmentation of the pentose substrate. Both reactions occur simultaneously and in competition at the same active site. Although the small subunit is not catalytic it is essential for maximal activity. The sequence is that of Ribulose bisphosphate carboxylase small subunit, chloroplastic 2 from Mesembryanthemum crystallinum (Common ice plant).